The primary structure comprises 476 residues: S-adenosylmethionine-dependent nucleotide dehydratase (476 aa).

The segment at 1-168 is cytidylate kinase-like domain; that stretch reads MKTKITLSGF…LTANEVADLI (168 aa). Residue 9 to 17 coordinates ATP; the sequence is GFAGTGKST. The 225-residue stretch at 176–400 folds into the Radical SAM core domain; it reads NAVSKIPSVN…HKDVETIVPE (225 aa). A prokaryotic viperin domain region spans residues 183 to 476; sequence SVNFHLWQPC…DLRKEEVSYE (294 aa). Residues Cys192, Cys196, and Cys199 each coordinate [4Fe-4S] cluster.

The protein in the N-terminal section; belongs to the cytidylate kinase-like family. It in the C-terminal section; belongs to the radical SAM superfamily. Viperin family. [4Fe-4S] cluster is required as a cofactor.

It carries out the reaction GTP + AH2 + S-adenosyl-L-methionine = 3'-deoxy-3',4'-didehydro-GTP + 5'-deoxyadenosine + L-methionine + A + H2O + H(+). In terms of biological role, expression of pVip60 in E.coli (strain MG1655) confers resistance to phage T7; prevents culture collapse upon infection. Catalyzes the conversion of guanosine triphosphate (GTP) to 3'-deoxy-3',4'-didehydro-GTP (ddhGTP), probably via a SAM-dependent radical mechanism. The modified nucleotide represses transcription from T7 RNA polymerase-directed genes (possibly by acting as chain terminators), strongly suggesting these nucleotides block viral polymerase transcription. Its function is as follows. The N-terminus of the protein may generate NTP for use by the viperin domain. This Lacinutrix mariniflava (strain JCM 13824 / KCCM 42306 / AKS432) protein is S-adenosylmethionine-dependent nucleotide dehydratase.